We begin with the raw amino-acid sequence, 423 residues long: MIDLKQLRDDPDRVRESQRTRGEDPGLVDQLLQADQARREAISAADATRAEHKAYTKSMGKKMRDASPEEKENLRAKGTELSNVVKEKEEAQRVAEASVHDLQMQISNIVEGAPAGGEEDFVVVEKVGTPPQFDFEPKDHLELGESLGIIDMERGAKVSGSRFYFLKGAGALLQLGMLQLAAQKAVQHGFELMITPVIVNPESMSGTGFLGQHADEIYYLQEDNQYLVGTSEVALAGYHSKEIIDLSAGPKRYAGWSSCFRREAGSYGKDTRGILRVHQFDKVEMFSYCKPEDAAAEHQKLLSMEREMLAAVEVPYRIIDVAGGDLGSSAARKFDTEAWVPTQNTYRELTSTSNCTTFQARRLGIRYRDENNKTQIAATLNGTLATTRWLVAILENNQQADGSVKVPEALQPYVGQDVLKPVK.

2 stretches are compositionally biased toward basic and acidic residues: residues 1–24 (MIDL…RGED) and 62–71 (KMRDASPEEK). The disordered stretch occupies residues 1-71 (MIDLKQLRDD…KMRDASPEEK (71 aa)). 230–232 (TSE) is an L-serine binding site. Residues 261–263 (RRE) and Val-277 each bind ATP. Glu-284 lines the L-serine pocket. Residue 348-351 (ELTS) participates in ATP binding. Thr-383 contributes to the L-serine binding site.

The protein belongs to the class-II aminoacyl-tRNA synthetase family. Type-1 seryl-tRNA synthetase subfamily. As to quaternary structure, homodimer. The tRNA molecule binds across the dimer.

Its subcellular location is the cytoplasm. It carries out the reaction tRNA(Ser) + L-serine + ATP = L-seryl-tRNA(Ser) + AMP + diphosphate + H(+). It catalyses the reaction tRNA(Sec) + L-serine + ATP = L-seryl-tRNA(Sec) + AMP + diphosphate + H(+). It functions in the pathway aminoacyl-tRNA biosynthesis; selenocysteinyl-tRNA(Sec) biosynthesis; L-seryl-tRNA(Sec) from L-serine and tRNA(Sec): step 1/1. Its function is as follows. Catalyzes the attachment of serine to tRNA(Ser). Is also able to aminoacylate tRNA(Sec) with serine, to form the misacylated tRNA L-seryl-tRNA(Sec), which will be further converted into selenocysteinyl-tRNA(Sec). This is Serine--tRNA ligase from Corynebacterium kroppenstedtii (strain DSM 44385 / JCM 11950 / CIP 105744 / CCUG 35717).